Here is a 188-residue protein sequence, read N- to C-terminus: MEVQVAPLRSWEDFFPGSDRFGRPDFKDISKWNNRVVNNLLYYQTNYLMVAAAVVAIVGFLSPLNMLIGGTVVILVFLGFVWVSHNKDILRRMKKQYPTTFVIVIMLSSYFLISYLGDVMVFMFGITLPLLLMFIHASLRLRNIKNKLENKKEEIGLKKTPMGIILDALEQQEDNINKLASYIPKVKE.

At Met1 the chain carries N-acetylmethionine. The Cytoplasmic segment spans residues 1–35 (MEVQVAPLRSWEDFFPGSDRFGRPDFKDISKWNNR). 2 consecutive transmembrane segments (helical) span residues 36–56 (VVNN…AVVA) and 57–77 (IVGF…ILVF). The Cytoplasmic portion of the chain corresponds to 78 to 93 (LGFVWVSHNKDILRRM). A run of 2 helical transmembrane segments spans residues 94-114 (KKQY…FLIS) and 115-135 (YLGD…LMFI). Topologically, residues 136 to 188 (HASLRLRNIKNKLENKKEEIGLKKTPMGIILDALEQQEDNINKLASYIPKVKE) are cytoplasmic. The interval 136–188 (HASLRLRNIKNKLENKKEEIGLKKTPMGIILDALEQQEDNINKLASYIPKVKE) is targeting to endoplasmic reticulum membrane.

This sequence belongs to the PRA1 family. Binds to prenylated RAB and Ras superfamily members.

The protein resides in the endoplasmic reticulum membrane. The protein localises to the cell membrane. Its subcellular location is the cytoplasm. It is found in the cytoskeleton. Regulates intracellular concentrations of taurine and glutamate. Negatively modulates SLC1A1/EAAC1 glutamate transport activity by decreasing its affinity for glutamate in a PKC activity-dependent manner. May be involved in membrane traffic. This is PRA1 family protein 3 (ARL6IP5) from Gallus gallus (Chicken).